Consider the following 122-residue polypeptide: MALNIENIIAEIKEASILELNDLVKAIEEEFGVTAAAPVAAAGAAGGEEAAAKDSFDIELTAGGDKKVAVIKVVREITGEGLKEAKGLVDNAPSVLKEGVAAAEAEELKAKLEEAGATVTLK.

Belongs to the bacterial ribosomal protein bL12 family. As to quaternary structure, homodimer. Part of the ribosomal stalk of the 50S ribosomal subunit. Forms a multimeric L10(L12)X complex, where L10 forms an elongated spine to which 2 to 4 L12 dimers bind in a sequential fashion. Binds GTP-bound translation factors.

Forms part of the ribosomal stalk which helps the ribosome interact with GTP-bound translation factors. Is thus essential for accurate translation. The polypeptide is Large ribosomal subunit protein bL12 (Streptococcus mutans serotype c (strain ATCC 700610 / UA159)).